The chain runs to 457 residues: Flavin-containing monooxygenase FMO GS-OX2 (457 aa).

17-22 is a binding site for FAD; it reads GAGAAG. 211 to 216 serves as a coordination point for NADP(+); that stretch reads GNFASG.

It belongs to the FMO family.

It carries out the reaction a (Z)-omega-(methylsulfanyl)-N-sulfo-alkylhydroximate S-glucoside + NADPH + O2 + H(+) = a (Z)-omega-(methylsulfinyl)-alkyl-glucosinolate + NADP(+) + H2O. Catalyzes the conversion of methylthioalkyl glucosinolates of any chain length into methylsulfinylalkyl glucosinolates. This Arabidopsis thaliana (Mouse-ear cress) protein is Flavin-containing monooxygenase FMO GS-OX2 (FMOGS-OX2).